The following is a 106-amino-acid chain: Large ribosomal subunit protein bL21 (106 aa).

It belongs to the bacterial ribosomal protein bL21 family. Part of the 50S ribosomal subunit. Contacts protein L20.

In terms of biological role, this protein binds to 23S rRNA in the presence of protein L20. The sequence is that of Large ribosomal subunit protein bL21 from Chlamydia pneumoniae (Chlamydophila pneumoniae).